The chain runs to 215 residues: Phosphatidylserine decarboxylase proenzyme (215 aa).

Catalysis depends on Ser-185, which acts as the Schiff-base intermediate with substrate; via pyruvic acid. A Pyruvic acid (Ser); by autocatalysis modification is found at Ser-185.

This sequence belongs to the phosphatidylserine decarboxylase family. PSD-A subfamily. In terms of assembly, heterodimer of a large membrane-associated beta subunit and a small pyruvoyl-containing alpha subunit. Pyruvate is required as a cofactor. Post-translationally, is synthesized initially as an inactive proenzyme. Formation of the active enzyme involves a self-maturation process in which the active site pyruvoyl group is generated from an internal serine residue via an autocatalytic post-translational modification. Two non-identical subunits are generated from the proenzyme in this reaction, and the pyruvate is formed at the N-terminus of the alpha chain, which is derived from the carboxyl end of the proenzyme. The post-translation cleavage follows an unusual pathway, termed non-hydrolytic serinolysis, in which the side chain hydroxyl group of the serine supplies its oxygen atom to form the C-terminus of the beta chain, while the remainder of the serine residue undergoes an oxidative deamination to produce ammonia and the pyruvoyl prosthetic group on the alpha chain.

Its subcellular location is the cell membrane. It carries out the reaction a 1,2-diacyl-sn-glycero-3-phospho-L-serine + H(+) = a 1,2-diacyl-sn-glycero-3-phosphoethanolamine + CO2. It participates in phospholipid metabolism; phosphatidylethanolamine biosynthesis; phosphatidylethanolamine from CDP-diacylglycerol: step 2/2. Functionally, catalyzes the formation of phosphatidylethanolamine (PtdEtn) from phosphatidylserine (PtdSer). This Streptomyces avermitilis (strain ATCC 31267 / DSM 46492 / JCM 5070 / NBRC 14893 / NCIMB 12804 / NRRL 8165 / MA-4680) protein is Phosphatidylserine decarboxylase proenzyme.